The sequence spans 105 residues: Large ribosomal subunit protein uL24 (105 aa).

This sequence belongs to the universal ribosomal protein uL24 family. In terms of assembly, part of the 50S ribosomal subunit.

One of two assembly initiator proteins, it binds directly to the 5'-end of the 23S rRNA, where it nucleates assembly of the 50S subunit. Its function is as follows. One of the proteins that surrounds the polypeptide exit tunnel on the outside of the subunit. The protein is Large ribosomal subunit protein uL24 of Mycobacterium leprae (strain Br4923).